Consider the following 207-residue polypeptide: ATP-dependent Clp protease proteolytic subunit (207 aa).

Catalysis depends on Ser-111, which acts as the Nucleophile. The active site involves His-136.

Belongs to the peptidase S14 family. As to quaternary structure, fourteen ClpP subunits assemble into 2 heptameric rings which stack back to back to give a disk-like structure with a central cavity, resembling the structure of eukaryotic proteasomes.

It is found in the cytoplasm. It carries out the reaction Hydrolysis of proteins to small peptides in the presence of ATP and magnesium. alpha-casein is the usual test substrate. In the absence of ATP, only oligopeptides shorter than five residues are hydrolyzed (such as succinyl-Leu-Tyr-|-NHMec, and Leu-Tyr-Leu-|-Tyr-Trp, in which cleavage of the -Tyr-|-Leu- and -Tyr-|-Trp bonds also occurs).. Cleaves peptides in various proteins in a process that requires ATP hydrolysis. Has a chymotrypsin-like activity. Plays a major role in the degradation of misfolded proteins. The protein is ATP-dependent Clp protease proteolytic subunit of Pectobacterium atrosepticum (strain SCRI 1043 / ATCC BAA-672) (Erwinia carotovora subsp. atroseptica).